Here is a 1255-residue protein sequence, read N- to C-terminus: TBC1 domain family member 1 (1255 aa).

Ser-146 is modified (phosphoserine). Residues 208 to 228 (RTDWEAPTGQPSAPGPRPMRK) are disordered. At Ser-229 the chain carries Phosphoserine; by PKB/AKT1. The residue at position 231 (Ser-231) is a Phosphoserine; by AMPK. The region spanning 238-398 (LAFRKEFQDA…LHKLCERIEG (161 aa)) is the PID domain. Ser-489 bears the Phosphoserine; by PKB/AKT1 mark. Phosphoserine is present on Ser-497. Thr-499 is modified (phosphothreonine; by PKB/AKT1). Residues Ser-501, Ser-519, Ser-521, Ser-559, Ser-560, Ser-564, Ser-565, and Ser-579 each carry the phosphoserine modification. Disordered stretches follow at residues 509–544 (GNKA…MGDK) and 559–581 (SSDD…LSPQ). The segment covering 519 to 539 (SASVDLDSSTSSTLSNTSKEL) has biased composition (low complexity). At Thr-590 the chain carries Phosphothreonine. Disordered stretches follow at residues 595-614 (PVEC…VSQR) and 621-681 (SVST…GNAV). A Phosphoserine modification is found at Ser-608. The residue at position 621 (Ser-621) is a Phosphoserine; by PKB/AKT1. 2 positions are modified to phosphoserine: Ser-660 and Ser-661. Residues 670–679 (HNSSGEQSGN) show a composition bias toward polar residues. The residue at position 697 (Ser-697) is a Phosphoserine; by PKB/AKT1. Residues Ser-698 and Ser-699 each carry the phosphoserine modification. Ser-700 is modified (phosphoserine; by AMPK). Positions 764–786 (DSPSRYEDYSELGELPPRSPLEP) are disordered. Ser-782 and Ser-1028 each carry phosphoserine. The region spanning 887–1081 (GVPRHHRGEI…RVFDMIFLQG (195 aa)) is the Rab-GAP TBC domain. Tyr-1039 bears the Phosphotyrosine mark. The residue at position 1218 (Thr-1218) is a Phosphothreonine. Residues 1233–1255 (LRRQSARPSTPEPDCTQLEPTGD) form a disordered region.

In terms of assembly, interacts with APPL2 (via BAR domain); interaction is dependent of TBC1D1 phosphorylation at Ser-229; interaction diminishes the phosphorylation of TBC1D1 at Thr-590, resulting in inhibition of SLC2A4/GLUT4 translocation and glucose uptake. Post-translationally, insulin-stimulated phosphorylation by AKT family kinases stimulates SLC2A4/GLUT4 translocation. As to expression, expressed in highest levels in hematopoietic cells, testis and kidney.

It is found in the nucleus. May act as a GTPase-activating protein for Rab family protein(s). May play a role in the cell cycle and differentiation of various tissues. Involved in the trafficking and translocation of GLUT4-containing vesicles and insulin-stimulated glucose uptake into cells. In Mus musculus (Mouse), this protein is TBC1 domain family member 1 (Tbc1d1).